The chain runs to 424 residues: Otefin (424 aa).

The LEM domain occupies 1 to 30; the sequence is MADVDDFDSLSNAELRAKMLAQGLPNIPVT. The tract at residues 1–50 is required for binding to Med and germline stem cell maintenance; that stretch reads MADVDDFDSLSNAELRAKMLAQGLPNIPVTDSSRKVLVKRLRASIGGQAS. The segment at 42 to 186 is disordered; sequence RASIGGQASP…SSKRADREEN (145 aa). Residues S44, S50, and S54 each carry the phosphoserine modification. Position 63 is a phosphothreonine (T63). Over residues 65–80 the composition is skewed to low complexity; that stretch reads APAPGAPSAPAAASTP. The short motif at 92–99 is the Nuclear localization signal element; sequence ATKARRTI. The span at 103 to 133 shows a compositional bias: basic and acidic residues; it reads EAKEPVRRLPEEAIRRRPDEADRLRSEEPVA. Phosphoserine is present on S152. Residues 157 to 170 show a composition bias toward basic and acidic residues; it reads SERKVVEPLRKPET. S192 and S198 each carry phosphoserine. Residues 259 to 278 form a disordered region; the sequence is PSVPSARAQTTSSTRSYDYA. Residues 262–274 show a composition bias toward low complexity; sequence PSARAQTTSSTRS. The required for binding to Med stretch occupies residues 271–400; it reads STRSYDYASN…NRWLNSLEQK (130 aa). Residue S321 is modified to Phosphoserine. Phosphothreonine is present on T324. S326 is subject to Phosphoserine. Residue T358 is modified to Phosphothreonine. S378 and S385 each carry phosphoserine. The essential for nuclear membrane localization and germline stem cell maintenance stretch occupies residues 400 to 424; the sequence is KYHIKSKLFIVLLVLLLIGVYYIFY. Residues 406–424 are essential for nuclear membrane localization; it reads KLFIVLLVLLLIGVYYIFY.

As to quaternary structure, interacts with Med. Interacts with Lam. Interacts with aurA, alphaTub84B, gammaTub23C and gammaTub37C. Interacts with Nemp. Post-translationally, phosphorylation at Thr-63 by aurA may be required for exit from mitosis. May be phosphorylated by Cdk1 and Pka-C1. As to expression, expressed in all cell types of the germarium and testis. Expressed in nurse cells, follicle cells and oocytes.

The protein resides in the nucleus inner membrane. Its subcellular location is the nucleus. The protein localises to the nucleoplasm. It is found in the cytoplasm. It localises to the chromosome. The protein resides in the cytoskeleton. Its subcellular location is the spindle pole. The protein localises to the microtubule organizing center. It is found in the centrosome. Functionally, inner nuclear membrane protein. Involved in the attachment of membrane vesicles to chromatin during nuclear assembly, and is probably required for centrosome maturation and cell cycle progression during mitosis. Essential for differentiation of certain tissues and the maintenance of progenitor cell populations. Required for the differentiation and maintenance of male and female germline stem cells (GSCs), as well as the maintenance of somatic cells in the GSC niche. This role is likely to be independent of the BMP (Dpp) pathway that negatively regulates bam transcription during GSC differentiation. During development, plays essential and redundant functions with the other LEM domain proteins; bocks and MAN1. Also has a redundant but important role with bocks during larval development. This is Otefin from Drosophila melanogaster (Fruit fly).